Reading from the N-terminus, the 95-residue chain is uncharacterized protein (95 aa).

Residue Lys-21 participates in phosphate binding. Residue Asp-44 coordinates Mg(2+). Position 47 (Asn-47) interacts with phosphate.

This sequence belongs to the HAD-like hydrolase superfamily. Cof family. The cofactor is Mg(2+).

This is an uncharacterized protein from Geobacillus stearothermophilus (Bacillus stearothermophilus).